A 117-amino-acid polypeptide reads, in one-letter code: Photosystem II reaction center Psb28 protein (117 aa).

The protein belongs to the Psb28 family. As to quaternary structure, part of the photosystem II complex.

The protein localises to the cellular thylakoid membrane. The sequence is that of Photosystem II reaction center Psb28 protein from Prochlorococcus marinus (strain MIT 9215).